A 185-amino-acid chain; its full sequence is NEDD8-conjugating enzyme UBE2F (185 aa).

The disordered stretch occupies residues 1–21; the sequence is MLTLASKLKRDDGVKGSRTTS. Residues 1–29 are interaction with uba3; the sequence is MLTLASKLKRDDGVKGSRTTSTTLDSMRR. In terms of domain architecture, UBC core spans 32–185; sequence VRDRLLVKEV…VEDYIKRYAR (154 aa). Residue Cys-116 is the Glycyl thioester intermediate of the active site.

This sequence belongs to the ubiquitin-conjugating enzyme family. UBE2F subfamily.

The catalysed reaction is [E1 NEDD8-activating enzyme]-S-[NEDD8 protein]-yl-L-cysteine + [E2 NEDD8-conjugating enzyme]-L-cysteine = [E1 NEDD8-activating enzyme]-L-cysteine + [E2 NEDD8-conjugating enzyme]-S-[NEDD8-protein]-yl-L-cysteine.. It functions in the pathway protein modification; protein neddylation. Accepts the ubiquitin-like protein NEDD8 from the UBA3-NAE1 E1 complex and catalyzes its covalent attachment to other proteins. Together with the E3 ubiquitin ligase rnf7/rbx2, specifically neddylates cullin-5 (cul5). Does not neddylate cul1, cul2, cul3, cul4a or cul4b. The polypeptide is NEDD8-conjugating enzyme UBE2F (ube2f) (Xenopus laevis (African clawed frog)).